The following is a 380-amino-acid chain: MAPNPRKSHPLLKMINNSLIDLPAPSNISAWWNFGSLLALCLMTQILTGLLLAMHYTADTTLAFSSVAHTCRDVQYGWLIRNMHANGASFFFICIYLHIGRGFYYGSYLHKETWNTGVLLLLTLMATAFVGYVLPWGQMSFWGATVITNMFSAIPYIGQTIVEWAWGGFSVDNPTLTRFFALHFLLPFMIAGLTLIHLTFLHESGSNNPLGIVSNCDKIPFHPYYSLKDALGLALLLLPLTTMALFSPNLLGDPENFTPANPLVTPPHIKPEWYFLFAYAILRSIPNKLGGVLALAASVLVLFLSPLLHKSKQRTMAFRPLSQLLFWTLVANLLILTWIGSQPVEHPFIIIGQLASTTYFIILLILFPITSALENKMLNF.

4 consecutive transmembrane segments (helical) span residues 34–54 (FGSL…LLAM), 78–99 (WLIR…YLHI), 114–134 (WNTG…GYVL), and 179–199 (FFAL…IHLT). Positions 84 and 98 each coordinate heme b. Heme b is bound by residues His-183 and His-197. Position 202 (His-202) interacts with a ubiquinone. Helical transmembrane passes span 227-247 (LKDA…ALFS), 289-309 (LGGV…PLLH), 321-341 (LSQL…WIGS), and 348-368 (FIII…ILFP).

The protein belongs to the cytochrome b family. The cytochrome bc1 complex contains 11 subunits: 3 respiratory subunits (MT-CYB, CYC1 and UQCRFS1), 2 core proteins (UQCRC1 and UQCRC2) and 6 low-molecular weight proteins (UQCRH/QCR6, UQCRB/QCR7, UQCRQ/QCR8, UQCR10/QCR9, UQCR11/QCR10 and a cleavage product of UQCRFS1). This cytochrome bc1 complex then forms a dimer. Requires heme b as cofactor.

Its subcellular location is the mitochondrion inner membrane. In terms of biological role, component of the ubiquinol-cytochrome c reductase complex (complex III or cytochrome b-c1 complex) that is part of the mitochondrial respiratory chain. The b-c1 complex mediates electron transfer from ubiquinol to cytochrome c. Contributes to the generation of a proton gradient across the mitochondrial membrane that is then used for ATP synthesis. The chain is Cytochrome b (MT-CYB) from Oceanodroma tethys (Wedge-rumped storm-petrel).